We begin with the raw amino-acid sequence, 438 residues long: Phospholipase D Y (438 aa).

Positions 1–19 (MIINRLFIIIVLFFVNVNS) are cleaved as a signal peptide. Residue Asn50 is glycosylated (N-linked (GlcNAc...) asparagine). A PLD phosphodiesterase 1 domain is found at 145–172 (GSGVLHTKLIIIDESSAYVGSANADWSS). Residues His150, Lys152, and Asp157 contribute to the active site. Residues Asn223, Asn336, and Asn394 are each glycosylated (N-linked (GlcNAc...) asparagine). The region spanning 373–399 (YTRVNHAKFMVTEKQSYVGTSNWSQDY) is the PLD phosphodiesterase 2 domain.

It belongs to the phospholipase D family.

It carries out the reaction a 1,2-diacyl-sn-glycero-3-phosphocholine + H2O = a 1,2-diacyl-sn-glycero-3-phosphate + choline + H(+). With respect to regulation, inhibited by butan-1-ol. Its function is as follows. Hydrolyzes membrane phospholipids, such as PtdCho (phosphatidylcholine), producing the free headgroup and PtdOH (phosphatidic acid; signaling molecule on its own). This Dictyostelium discoideum (Social amoeba) protein is Phospholipase D Y (pldY).